A 561-amino-acid polypeptide reads, in one-letter code: DNA ligase B (561 aa).

Residue Lys125 is the N6-AMP-lysine intermediate of the active site.

The protein belongs to the NAD-dependent DNA ligase family. LigB subfamily.

It catalyses the reaction NAD(+) + (deoxyribonucleotide)n-3'-hydroxyl + 5'-phospho-(deoxyribonucleotide)m = (deoxyribonucleotide)n+m + AMP + beta-nicotinamide D-nucleotide.. Functionally, catalyzes the formation of phosphodiester linkages between 5'-phosphoryl and 3'-hydroxyl groups in double-stranded DNA using NAD as a coenzyme and as the energy source for the reaction. The protein is DNA ligase B of Salmonella gallinarum (strain 287/91 / NCTC 13346).